Consider the following 665-residue polypeptide: RNA polymerase II-associated protein 3 (665 aa).

T2 carries the N-acetylthreonine modification. The TPR 1 repeat unit spans residues 8–41; it reads IELQLQVKQNAEELQDFMRDLENWEKDIKQKDME. The interval 37–82 is disordered; that stretch reads QKDMELRRQNGVPEENLPPIRNGNFRKKKKGKAKESSKKTREENTK. Positions 69 to 82 are enriched in basic and acidic residues; it reads AKESSKKTREENTK. 4 positions are modified to phosphoserine: S87, S116, S119, and S121. A disordered region spans residues 109 to 129; sequence DSTHESLSQESESEEDGIHVD. TPR repeat units lie at residues 133-166, 168-200, 201-234, 282-315, 317-349, and 350-383; these read ALVLKEKGNKYFKQGKYDEAIDCYTKGMDADPYN, VLPTNRASAYFRLKKFAVAESDCNLAVALNRSY, TKAYSRRGAARFALQKLEEAKKDYERVLELEPNN, AISEKDRGNGFFKEGKYERAIECYTRGIAADGAN, LLPANRAMAYLKIQKYEEAEKDCTQAILLDGSY, and SKAFARRGTARTFLGKLNEAKQDFETVLLLEPGN. S481 carries the phosphoserine modification. A Glycyl lysine isopeptide (Lys-Gly) (interchain with G-Cter in SUMO2) cross-link involves residue K498.

Belongs to the RPAP3 family. Tightly associated with the RNA polymerase II complex. Component of the R2TP complex composed at least of RUVBL1, RUVBL2, RPAP3 and PIHD1. Component of the PAQosome complex which is responsible for the biogenesis of several protein complexes and which consists of R2TP complex members RUVBL1, RUVBL2, RPAP3 and PIH1D1, URI complex members PFDN2, PFDN6, PDRG1, UXT and URI1 as well as ASDURF, POLR2E and DNAAF10/WDR92. Interacts with PIH1D1. Interacts with TSC1 and TSC2. Interacts with PRPF8 and EFTUD2 in a ZNHIT2-dependent manner.

Forms an interface between the RNA polymerase II enzyme and chaperone/scaffolding protein, suggesting that it is required to connect RNA polymerase II to regulators of protein complex formation. This chain is RNA polymerase II-associated protein 3 (RPAP3), found in Homo sapiens (Human).